The chain runs to 884 residues: Chitin synthase E (884 aa).

Disordered regions lie at residues M1–S58 and A73–G108. Composition is skewed to polar residues over residues Q37–Y48 and E84–A93. A glycan (N-linked (GlcNAc...) asparagine) is linked at N44. Residues S95 to S105 are compositionally biased toward basic and acidic residues. N301 is a glycosylation site (N-linked (GlcNAc...) asparagine). Helical transmembrane passes span W513–Y532, I556–V576, I597–A617, Y635–F655, G681–L701, I708–V728, and V812–G832. N840 carries an N-linked (GlcNAc...) asparagine glycan. A helical membrane pass occupies residues V852 to L872.

This sequence belongs to the chitin synthase family. Class III subfamily.

It localises to the cell membrane. It catalyses the reaction [(1-&gt;4)-N-acetyl-beta-D-glucosaminyl](n) + UDP-N-acetyl-alpha-D-glucosamine = [(1-&gt;4)-N-acetyl-beta-D-glucosaminyl](n+1) + UDP + H(+). Functionally, polymerizes chitin, a structural polymer of the cell wall and septum, by transferring the sugar moiety of UDP-GlcNAc to the non-reducing end of the growing chitin polymer. Plays an important role in septal growth or maintenance. Mediates colony spore formation. ChsE and chsD seem to play a functionally redundant role in lateral cell wall chitin synthesis. Involved in resistance to echinocandins. This Aspergillus niger (strain ATCC MYA-4892 / CBS 513.88 / FGSC A1513) protein is Chitin synthase E.